The chain runs to 393 residues: MANDFLFTSESVSEGHPDKVADQISDAILDAIFREDPRSRVAAETLTNTGLVVLAGEITTNAHVDYIQVARDTIKRIGYDNTDYGIDYKGCAVLVAYDKQSNDIAQGVDHASDDHLNTGAGDQGLMFGYACDETPELMPAPIYYAHRLVERQAQLRKDGRLPFLRPDAKSQVTMRYVDGKPHSIDTVVLSTQHHPDQSETATRMKASFIEAVIEEIIKPVLPKEWLQETKYLINPTGRFVIGGPQGDCGLTGRKIIVDTYGGACPHGGGAFSGKDPTKVDRSAAYAARYVAKNIVAAGLARQCQIQVSYAIGVARPINVTVYTEGTGVIPDEKIAALVQEHFDLRPKGIIQMLDLLRPIYEKTAAYGHFGREEPEFTWEKTDKAAALRAAAGL.

His16 provides a ligand contact to ATP. Mg(2+) is bound at residue Asp18. Glu44 contacts K(+). The L-methionine site is built by Glu57 and Gln100. The flexible loop stretch occupies residues 100 to 110; it reads QSNDIAQGVDH. ATP contacts are provided by residues 167-169, 238-239, Asp247, 253-254, Ala270, and Lys274; these read DAK, RF, and RK. Asp247 serves as a coordination point for L-methionine. Position 278 (Lys278) interacts with L-methionine.

It belongs to the AdoMet synthase family. Homotetramer; dimer of dimers. Requires Mg(2+) as cofactor. It depends on K(+) as a cofactor.

It is found in the cytoplasm. It catalyses the reaction L-methionine + ATP + H2O = S-adenosyl-L-methionine + phosphate + diphosphate. The protein operates within amino-acid biosynthesis; S-adenosyl-L-methionine biosynthesis; S-adenosyl-L-methionine from L-methionine: step 1/1. Its function is as follows. Catalyzes the formation of S-adenosylmethionine (AdoMet) from methionine and ATP. The overall synthetic reaction is composed of two sequential steps, AdoMet formation and the subsequent tripolyphosphate hydrolysis which occurs prior to release of AdoMet from the enzyme. This Paracidovorax citrulli (strain AAC00-1) (Acidovorax citrulli) protein is S-adenosylmethionine synthase.